The sequence spans 582 residues: Probable inorganic phosphate transporter 1-9 (582 aa).

Residues 1–23 (MAPRIRVLAALDQARTQYYHFKA) are Cytoplasmic-facing. Residues 24–44 (IVIAGMGLFTDSYDLFCISPV) form a helical membrane-spanning segment. Residues 45–75 (MKIFGRVYYAPSGSVDGSGSGPGVTPPAVVS) lie on the Extracellular side of the membrane. The helical transmembrane segment at 76 to 96 (ATVGVALLGAVAGNVVFGALG) threads the bilayer. Residues 97–103 (DRVGRRR) are Cytoplasmic-facing. A helical membrane pass occupies residues 104–124 (VYGACLLLMVCSSVGSGLSVC). Residues 125 to 130 (RTRRCA) are Extracellular-facing. A helical transmembrane segment spans residues 131-151 (LASLCFFRFLLGVGVGGDYPL). Residues 152–165 (SATIMSEFANRRTR) lie on the Cytoplasmic side of the membrane. The helical transmembrane segment at 166–186 (GAFIAAVFSMQGFGILVSSAV) threads the bilayer. At 187–210 (TMAVAAAFDHYTGYPAPLDTPECA) the chain is on the extracellular side. Residues 211-231 (DLAWRIILMAGAVPAALTYYW) traverse the membrane as a helical segment. Topologically, residues 232–307 (RMSMPETARY…RRFVRQHGRD (76 aa)) are cytoplasmic. A helical membrane pass occupies residues 308 to 328 (LFACAAAWFLLDIPYYSSTLF). Residues 329–354 (QSQIYRPWFPPAAKVNAFQEAFNVAK) lie on the Extracellular side of the membrane. Residues 355-375 (FQAVIAVASTIPGYFAAMLLI) traverse the membrane as a helical segment. The Cytoplasmic portion of the chain corresponds to 376–385 (ERAGRRRLQM). A helical transmembrane segment spans residues 386–406 (AGFLLMAVFLFALAGPYDGYW). Residues 407-415 (RDHAKTAGY) lie on the Extracellular side of the membrane. Residues 416 to 436 (IVLYSLTFFSANLGPNTTTFI) form a helical membrane-spanning segment. Topologically, residues 437–451 (LPAELFPARFRSTCH) are cytoplasmic. A helical transmembrane segment spans residues 452–472 (GLSGAAGKLGALVGSIGFLWA). Topologically, residues 473–485 (SQQKDGAAAGHLP) are extracellular. A helical membrane pass occupies residues 486 to 506 (GIGMMYALFVLGGICLLGLAL). The Cytoplasmic portion of the chain corresponds to 507-582 (TYAFTPETMT…SPILPHRMSL (76 aa)). Residues 519 to 541 (LEENESSVQAQSQVGDGGSDAGN) are disordered.

The protein belongs to the major facilitator superfamily. Phosphate:H(+) symporter (TC 2.A.1.9) family. Expressed at low levels in roots.

It is found in the membrane. In terms of biological role, high-affinity transporter for external inorganic phosphate. This is Probable inorganic phosphate transporter 1-9 (PHT1-9) from Oryza sativa subsp. japonica (Rice).